Consider the following 428-residue polypeptide: Glutamate-1-semialdehyde 2,1-aminomutase 1 (428 aa).

The residue at position 267 (K267) is an N6-(pyridoxal phosphate)lysine.

It belongs to the class-III pyridoxal-phosphate-dependent aminotransferase family. HemL subfamily. As to quaternary structure, homodimer. The cofactor is pyridoxal 5'-phosphate.

Its subcellular location is the cytoplasm. It catalyses the reaction (S)-4-amino-5-oxopentanoate = 5-aminolevulinate. It participates in porphyrin-containing compound metabolism; protoporphyrin-IX biosynthesis; 5-aminolevulinate from L-glutamyl-tRNA(Glu): step 2/2. The sequence is that of Glutamate-1-semialdehyde 2,1-aminomutase 1 from Staphylococcus aureus (strain bovine RF122 / ET3-1).